The sequence spans 226 residues: Probable proteasome subunit beta type-7 (226 aa).

The protein belongs to the peptidase T1B family. In terms of assembly, the 26S proteasome consists of a 20S proteasome core and two 19S regulatory subunits. The 20S proteasome core is composed of 28 subunits that are arranged in four stacked rings, resulting in a barrel-shaped structure. The two end rings are each formed by seven alpha subunits, and the two central rings are each formed by seven beta subunits. The catalytic chamber with the active sites is on the inside of the barrel.

It is found in the cytoplasm. The protein resides in the nucleus. Non-catalytic component of the proteasome which degrades poly-ubiquitinated proteins in the cytoplasm and in the nucleus. It is essential for the regulated turnover of proteins and for the removal of misfolded proteins. The proteasome is a multicatalytic proteinase complex that is characterized by its ability to cleave peptides with Arg, Phe, Tyr, Leu, and Glu adjacent to the leaving group at neutral or slightly basic pH. It has an ATP-dependent proteolytic activity. The protein is Probable proteasome subunit beta type-7 (PRE4) of Encephalitozoon cuniculi (strain GB-M1) (Microsporidian parasite).